Reading from the N-terminus, the 552-residue chain is uncharacterized protein (552 aa).

Helical transmembrane passes span 127-147, 160-180, 393-413, and 517-537; these read AIML…ISLL, LIIV…YINI, LTKQ…LSAV, and VIDS…FICI.

Its subcellular location is the membrane. This is an uncharacterized protein from Saccharomyces cerevisiae (strain ATCC 204508 / S288c) (Baker's yeast).